We begin with the raw amino-acid sequence, 1159 residues long: WASH complex subunit 5 (1159 aa).

This sequence belongs to the strumpellin family. As to quaternary structure, component of the WASH complex.

It localises to the early endosome. Its function is as follows. Acts at least in part as component of the WASH complex which seems to regulate washc1 nucleation-promoting factor (NPF) activity and is required for its membrane targeting during endosomal sorting. This chain is WASH complex subunit 5, found in Xenopus tropicalis (Western clawed frog).